The sequence spans 345 residues: Sesquiterpene synthase GALMADRAFT_104215 (345 aa).

Positions 91, 226, 230, and 234 each coordinate Mg(2+). Positions 91–95 (DEFTD) match the DDXXD motif motif. Arg-316 and Tyr-317 together coordinate (2E,6E)-farnesyl diphosphate.

It belongs to the terpene synthase family. Requires Mg(2+) as cofactor.

The catalysed reaction is (2E,6E)-farnesyl diphosphate = beta-gurjunene + diphosphate. Terpene cyclase that catalyzes the cyclization of farnesyl diphosphate (FPP) to beta-gurjunene. The polypeptide is Sesquiterpene synthase GALMADRAFT_104215 (Galerina marginata (strain CBS 339.88)).